The primary structure comprises 995 residues: Serine-aspartate repeat-containing protein C (995 aa).

Residues 1 to 50 (MNNKKTATNRKGMIPNRLNKFSIRKYSVGTASILVGTTLIFGLSGHEAKA) form the signal peptide. The short motif at 21–32 (FSIRKYSVGTAS) is the YSIRK-G/S signaling motif element. Residues 51-164 (AEHTNGELNQ…STTPKTTTIK (114 aa)) are disordered. Residues 51–495 (AEHTNGELNQ…GSSTANGDQK (445 aa)) form a ligand binding A region region. The segment covering 56 to 71 (GELNQSKNETTAPSEN) has biased composition (polar residues). A compositionally biased stretch (basic and acidic residues) spans 72-83 (KTTKKVDSRQLK). The segment covering 84–155 (DNTQTATADQ…SNLTQAKDVS (72 aa)) has biased composition (polar residues). CNA-B domains lie at 496-606 (KYNL…YKTP) and 607-717 (KYSL…EEET). The segment at 678–975 (TQTGTNTTED…NNSNNGTLFG (298 aa)) is disordered. Composition is skewed to acidic residues over residues 685 to 695 (TEDDKDADGGE) and 712 to 934 (YYEE…DSDS). Residues 958–962 (LPETG) carry the LPXTG sorting signal motif. Over residues 960 to 975 (ETGSENNNSNNGTLFG) the composition is skewed to low complexity. T961 bears the Pentaglycyl murein peptidoglycan amidated threonine mark. The propeptide at 962-995 (GSENNNSNNGTLFGGLFAALGSLLLFGRRKKQNK) is removed by sortase.

This sequence belongs to the serine-aspartate repeat-containing protein (SDr) family. As to quaternary structure, homodimerizes; via N2-Domain. Interacts with host NRXN1; this interaction mediates bacterial attachment to host cells.

It is found in the secreted. The protein resides in the cell wall. Functionally, cell surface-associated calcium-binding protein which plays an important role in adhesion and pathogenesis. Mediates interactions with components of the extracellular matrix such as host NRXN1 to promote bacterial adhesion. In Staphylococcus aureus (strain NCTC 8325 / PS 47), this protein is Serine-aspartate repeat-containing protein C (sdrC).